The sequence spans 214 residues: Adenylate kinase (214 aa).

10–15 (GAGKGT) serves as a coordination point for ATP. The segment at 30–59 (STGDMLRAAVKAGTPLGLEAKKVMDAGQLV) is NMP. AMP contacts are provided by residues Thr31, Arg36, 57–59 (QLV), 85–88 (GFPR), and Gln92. The segment at 122–159 (GRRVHPGSGRVYHVVFNPPKVEGKDDVTGEDLAIRPDD) is LID. Residues Arg123 and 132 to 133 (VY) contribute to the ATP site. The AMP site is built by Arg156 and Arg167. Gln200 contacts ATP.

It belongs to the adenylate kinase family. In terms of assembly, monomer.

Its subcellular location is the cytoplasm. The enzyme catalyses AMP + ATP = 2 ADP. The protein operates within purine metabolism; AMP biosynthesis via salvage pathway; AMP from ADP: step 1/1. Its function is as follows. Catalyzes the reversible transfer of the terminal phosphate group between ATP and AMP. Plays an important role in cellular energy homeostasis and in adenine nucleotide metabolism. The chain is Adenylate kinase from Shewanella oneidensis (strain ATCC 700550 / JCM 31522 / CIP 106686 / LMG 19005 / NCIMB 14063 / MR-1).